The sequence spans 370 residues: Cobalt-precorrin-5B C(1)-methyltransferase (370 aa).

The protein belongs to the CbiD family.

The catalysed reaction is Co-precorrin-5B + S-adenosyl-L-methionine = Co-precorrin-6A + S-adenosyl-L-homocysteine. The protein operates within cofactor biosynthesis; adenosylcobalamin biosynthesis; cob(II)yrinate a,c-diamide from sirohydrochlorin (anaerobic route): step 6/10. In terms of biological role, catalyzes the methylation of C-1 in cobalt-precorrin-5B to form cobalt-precorrin-6A. The chain is Cobalt-precorrin-5B C(1)-methyltransferase from Prochlorococcus marinus (strain MIT 9312).